Consider the following 130-residue polypeptide: uncharacterized protein (130 aa).

2 disordered regions span residues 1–47 (MTFY…QSNT) and 78–130 (QTLE…SESS). The span at 13-33 (QWKQLQTQQNKKNSPRPVTSS) shows a compositional bias: polar residues. Residues 86–110 (PSKHKRKRTKYRRTKKSKHHSRKKT) show a composition bias toward basic residues. A compositionally biased stretch (basic and acidic residues) spans 117-130 (SERDSTTGRESESS).

This is an uncharacterized protein from Torque teno mini virus 1 (isolate TLMV-CBD279).